The following is a 205-amino-acid chain: Adenylyl-sulfate kinase (205 aa).

ATP is bound at residue 31 to 38; it reads GLSGAGKS. The active-site Phosphoserine intermediate is the S105.

It belongs to the APS kinase family.

It catalyses the reaction adenosine 5'-phosphosulfate + ATP = 3'-phosphoadenylyl sulfate + ADP + H(+). Its pathway is sulfur metabolism; hydrogen sulfide biosynthesis; sulfite from sulfate: step 2/3. Its function is as follows. Catalyzes the synthesis of activated sulfate. The chain is Adenylyl-sulfate kinase from Shewanella oneidensis (strain ATCC 700550 / JCM 31522 / CIP 106686 / LMG 19005 / NCIMB 14063 / MR-1).